We begin with the raw amino-acid sequence, 1135 residues long: MSSPLNNRGTCSRSSSARSRHSARVVAQTPVDAQLHAEFESSQRNFDYSSSVSAAIRPSVSTSTVSTYHQTMQRGLYIQPFGCLLAVHPDTFTLLAYSENAPEMLDLTPHAVPTIDQRDALAVGADVRTLFRSQSSVALHKAATFGEVNLLNPILVHARTSGKPFYAILHRIDVGLVIDLEPVNPVDVPVTAAGALKSYKLAAKAISRLQSLPSGNLSLLCDVLVREVSELTGYDRVMAYKFHEDEHGEVISECRRSDLEPYLGLHYPATDIPQASRFLFMKNKVRMICDCSATLVKIIQDDSLAQPLSLCGSTLRASHGCHAQYMANMGSVASLVMSVTISNDEEEDVDTGSDQQPKGRKLWGLVVCHHTSPRFVPFPLRYACEFLLQVFGIQLNKEVELAAQAKERHILRTQTLLWDMLLRDAPVGIFTQSPNVMDLVKCDGVALYYQNQLLLLGSTPSESEIKSIATWLQENHDGSTGLSTDSLVEAGYPGAAALREVVCGMAAIKISSKDFIFWFRSHTTKEIKWGGAKHEPVDADDNGRKMHPRSSFKAFLEVVKWRSVPWEDVEMDAIHSLQLILRGSLQDEDANRNNVRSIVKAPPDDTKKIQGLLELRTVTNEMVRLIETATAPVLAVDIAGNINGWNNKAAELTGLPVMEAIGRPLIDLVVVDSIEVVKRILDSALQGIEEQNLEIKLKAFHEQECNGPIILMVNSCCSRDLSEKVIGVCFVGQDLTTQKMIMDKYTRIQGDYVAIVKNPSELIPPIFMINDLGSCLEWNKAMQKITGIQREDVIDKLLIGEVFTLHDYGCRVKDHATLTKLSILMNAVISGQDPEKLLFGFFDTDGKYIESLLTVNKRINAEGKITGAICFLHVASPELQHALQVQKMSEQAATNSFKELTYIHQELRNPLNGMQFTCNLLEPSELTEEQRKLLSSNILCQDQLKKILHDTDLESIEQCYMEMNTVEFNLEEALNTVLMQGIPLGKEKRISIERDWPVEISRMYLYGDNLRLQQVLADYLACALQFTQPAEGPIVLQVIPKKENIGSGMQIAHLEFRIVHPAPGVPEALIQEMFRHNPEVSREGLGLYICQKLVKTMSGTVQYLREADTSSFIILIEFPVAQLSSKRSKPSTSKF.

The span at 1–11 shows a compositional bias: polar residues; sequence MSSPLNNRGTC. Positions 1 to 26 are disordered; that stretch reads MSSPLNNRGTCSRSSSARSRHSARVV. Residues 216-399 form the GAF domain; it reads NLSLLCDVLV…VFGIQLNKEV (184 aa). Cysteine 321 serves as a coordination point for phytochromobilin. PAS domains follow at residues 618 to 688 and 748 to 822; these read VTNE…LQGI and IQGD…TKLS. In terms of domain architecture, Histidine kinase spans 902-1122; sequence YIHQELRNPL…IILIEFPVAQ (221 aa).

The protein belongs to the phytochrome family. As to quaternary structure, homodimer. Contains one covalently linked phytochromobilin chromophore.

In terms of biological role, regulatory photoreceptor which exists in two forms that are reversibly interconvertible by light: the Pr form that absorbs maximally in the red region of the spectrum and the Pfr form that absorbs maximally in the far-red region. Photoconversion of Pr to Pfr induces an array of morphogenic responses, whereas reconversion of Pfr to Pr cancels the induction of those responses. Pfr controls the expression of a number of nuclear genes including those encoding the small subunit of ribulose-bisphosphate carboxylase, chlorophyll A/B binding protein, protochlorophyllide reductase, rRNA, etc. It also controls the expression of its own gene(s) in a negative feedback fashion. This Sorghum bicolor (Sorghum) protein is Phytochrome C (PHYC).